Consider the following 157-residue polypeptide: UPF0225 protein PA14_50900 (157 aa).

Belongs to the UPF0225 family.

This Pseudomonas aeruginosa (strain UCBPP-PA14) protein is UPF0225 protein PA14_50900.